Reading from the N-terminus, the 1295-residue chain is Phosphoribosylformylglycinamidine synthase (1295 aa).

The disordered stretch occupies residues 305–327; sequence WPGAATGSGGEIRDEGATGRGAK. ATP is bound by residues 307–318 and A678; that span reads GAATGSGGEIRD. Mg(2+)-binding residues include E718, N722, and D884. S886 is a binding site for ATP. The region spanning 1042–1295 is the Glutamine amidotransferase type-1 domain; the sequence is VAVLREQGVN…IFRNARKQLG (254 aa). C1135 acts as the Nucleophile in catalysis. Active-site residues include H1260 and E1262.

In the N-terminal section; belongs to the FGAMS family. As to quaternary structure, monomer.

The protein localises to the cytoplasm. The enzyme catalyses N(2)-formyl-N(1)-(5-phospho-beta-D-ribosyl)glycinamide + L-glutamine + ATP + H2O = 2-formamido-N(1)-(5-O-phospho-beta-D-ribosyl)acetamidine + L-glutamate + ADP + phosphate + H(+). It participates in purine metabolism; IMP biosynthesis via de novo pathway; 5-amino-1-(5-phospho-D-ribosyl)imidazole from N(2)-formyl-N(1)-(5-phospho-D-ribosyl)glycinamide: step 1/2. Its function is as follows. Phosphoribosylformylglycinamidine synthase involved in the purines biosynthetic pathway. Catalyzes the ATP-dependent conversion of formylglycinamide ribonucleotide (FGAR) and glutamine to yield formylglycinamidine ribonucleotide (FGAM) and glutamate. The polypeptide is Phosphoribosylformylglycinamidine synthase (Escherichia coli (strain UTI89 / UPEC)).